We begin with the raw amino-acid sequence, 143 residues long: Transcriptional regulator MraZ (143 aa).

SpoVT-AbrB domains are found at residues 5-47 and 76-119; these read TFTP…PKAE and ADEQ…DAES.

Belongs to the MraZ family. Forms oligomers.

It localises to the cytoplasm. The protein localises to the nucleoid. The sequence is that of Transcriptional regulator MraZ from Corynebacterium jeikeium (strain K411).